Consider the following 570-residue polypeptide: Glucan 1,3-beta-glucosidase 2 (570 aa).

Asparagine 91, asparagine 116, asparagine 121, asparagine 184, asparagine 203, and asparagine 248 each carry an N-linked (GlcNAc...) asparagine glycan. The Proton donor role is filled by glutamate 338. Asparagine 364 carries an N-linked (GlcNAc...) asparagine glycan. Catalysis depends on glutamate 439, which acts as the Nucleophile. Asparagine 525 and asparagine 552 each carry an N-linked (GlcNAc...) asparagine glycan.

The protein belongs to the glycosyl hydrolase 5 (cellulase A) family.

The protein localises to the secreted. The enzyme catalyses Successive hydrolysis of beta-D-glucose units from the non-reducing ends of (1-&gt;3)-beta-D-glucans, releasing alpha-glucose.. The chain is Glucan 1,3-beta-glucosidase 2 (exg2) from Schizosaccharomyces pombe (strain 972 / ATCC 24843) (Fission yeast).